The primary structure comprises 378 residues: Cobalt-precorrin-5B C(1)-methyltransferase (378 aa).

Belongs to the CbiD family.

The enzyme catalyses Co-precorrin-5B + S-adenosyl-L-methionine = Co-precorrin-6A + S-adenosyl-L-homocysteine. It functions in the pathway cofactor biosynthesis; adenosylcobalamin biosynthesis; cob(II)yrinate a,c-diamide from sirohydrochlorin (anaerobic route): step 6/10. Its function is as follows. Catalyzes the methylation of C-1 in cobalt-precorrin-5B to form cobalt-precorrin-6A. The sequence is that of Cobalt-precorrin-5B C(1)-methyltransferase from Photorhabdus laumondii subsp. laumondii (strain DSM 15139 / CIP 105565 / TT01) (Photorhabdus luminescens subsp. laumondii).